A 98-amino-acid chain; its full sequence is NADH-ubiquinone oxidoreductase chain 4L (98 aa).

The next 3 membrane-spanning stretches (helical) occupy residues 1 to 21 (MEQI…GVLT), 28 to 48 (STLL…VLLI), and 61 to 81 (LILL…LVTI).

This sequence belongs to the complex I subunit 4L family. Core subunit of respiratory chain NADH dehydrogenase (Complex I) which is composed of 45 different subunits.

The protein resides in the mitochondrion inner membrane. It catalyses the reaction a ubiquinone + NADH + 5 H(+)(in) = a ubiquinol + NAD(+) + 4 H(+)(out). Core subunit of the mitochondrial membrane respiratory chain NADH dehydrogenase (Complex I) which catalyzes electron transfer from NADH through the respiratory chain, using ubiquinone as an electron acceptor. Part of the enzyme membrane arm which is embedded in the lipid bilayer and involved in proton translocation. The chain is NADH-ubiquinone oxidoreductase chain 4L (MT-ND4L) from Monodelphis domestica (Gray short-tailed opossum).